Reading from the N-terminus, the 249-residue chain is ATP synthase subunit a (249 aa).

A run of 6 helical transmembrane segments spans residues 26 to 46, 84 to 104, 114 to 134, 143 to 163, 185 to 205, and 208 to 228; these read FTNV…FLYL, FFPF…IGLF, IIVT…YGFF, LFVP…IEII, ITLK…ALGI, and AVLP…VAFL.

The protein belongs to the ATPase A chain family. F-type ATPases have 2 components, CF(1) - the catalytic core - and CF(0) - the membrane proton channel. CF(1) has five subunits: alpha(3), beta(3), gamma(1), delta(1), epsilon(1). CF(0) has three main subunits: a(1), b(2) and c(9-12). The alpha and beta chains form an alternating ring which encloses part of the gamma chain. CF(1) is attached to CF(0) by a central stalk formed by the gamma and epsilon chains, while a peripheral stalk is formed by the delta and b chains.

The protein resides in the cell inner membrane. Its function is as follows. Key component of the proton channel; it plays a direct role in the translocation of protons across the membrane. This is ATP synthase subunit a from Brucella canis (strain ATCC 23365 / NCTC 10854 / RM-666).